Reading from the N-terminus, the 283-residue chain is Pantothenate synthetase (283 aa).

30–37 (MGNLHDGH) contributes to the ATP binding site. Histidine 37 serves as the catalytic Proton donor. Glutamine 61 contributes to the (R)-pantoate binding site. Glutamine 61 is a beta-alanine binding site. Residue 149-152 (GEKD) participates in ATP binding. Position 155 (glutamine 155) interacts with (R)-pantoate. ATP contacts are provided by residues valine 178 and 186-189 (LSSR).

The protein belongs to the pantothenate synthetase family. Homodimer.

Its subcellular location is the cytoplasm. The catalysed reaction is (R)-pantoate + beta-alanine + ATP = (R)-pantothenate + AMP + diphosphate + H(+). It participates in cofactor biosynthesis; (R)-pantothenate biosynthesis; (R)-pantothenate from (R)-pantoate and beta-alanine: step 1/1. Functionally, catalyzes the condensation of pantoate with beta-alanine in an ATP-dependent reaction via a pantoyl-adenylate intermediate. In Salmonella arizonae (strain ATCC BAA-731 / CDC346-86 / RSK2980), this protein is Pantothenate synthetase.